Reading from the N-terminus, the 196-residue chain is Holliday junction branch migration complex subunit RuvA (196 aa).

Residues 1 to 63 (MYEYFKGIIS…EDAELLYGFA (63 aa)) form a domain I region. The tract at residues 64-142 (TEEEKQLFLS…AADGLAESKA (79 aa)) is domain II. Residues 143 to 146 (PVQT) form a flexible linker region. Positions 147–196 (VDNQELEEAMEAMLALGYKATELKKIKKFFEGTTDTAENYIKSALKMLVK) are domain III.

It belongs to the RuvA family. As to quaternary structure, homotetramer. Forms an RuvA(8)-RuvB(12)-Holliday junction (HJ) complex. HJ DNA is sandwiched between 2 RuvA tetramers; dsDNA enters through RuvA and exits via RuvB. An RuvB hexamer assembles on each DNA strand where it exits the tetramer. Each RuvB hexamer is contacted by two RuvA subunits (via domain III) on 2 adjacent RuvB subunits; this complex drives branch migration. In the full resolvosome a probable DNA-RuvA(4)-RuvB(12)-RuvC(2) complex forms which resolves the HJ.

Its subcellular location is the cytoplasm. In terms of biological role, the RuvA-RuvB-RuvC complex processes Holliday junction (HJ) DNA during genetic recombination and DNA repair, while the RuvA-RuvB complex plays an important role in the rescue of blocked DNA replication forks via replication fork reversal (RFR). RuvA specifically binds to HJ cruciform DNA, conferring on it an open structure. The RuvB hexamer acts as an ATP-dependent pump, pulling dsDNA into and through the RuvAB complex. HJ branch migration allows RuvC to scan DNA until it finds its consensus sequence, where it cleaves and resolves the cruciform DNA. The sequence is that of Holliday junction branch migration complex subunit RuvA from Streptococcus gordonii (strain Challis / ATCC 35105 / BCRC 15272 / CH1 / DL1 / V288).